The chain runs to 204 residues: Cell wall protein RHD3 (204 aa).

The first 15 residues, 1-15, serve as a signal peptide directing secretion; sequence MKFLAILSLSSSALA. Gly182 carries GPI-anchor amidated glycine lipidation. The propeptide at 183–204 is removed in mature form; the sequence is AAGQNKLSYGVGMAAVVAGLVM.

It belongs to the SRP1/TIP1 family. In terms of processing, the GPI-anchor is attached to the protein in the endoplasmic reticulum and serves to target the protein to the cell surface. There, the glucosamine-inositol phospholipid moiety is cleaved off and the GPI-modified mannoprotein is covalently attached via its lipidless GPI glycan remnant to the 1,6-beta-glucan of the outer cell wall layer. O-glycosylated by PMT1.

The protein resides in the secreted. Its subcellular location is the cell wall. The protein localises to the membrane. Functionally, component of the cell wall involved in virulence. Does not seem to have a major role in maintaining cell wall integrity but plays a role in the relationship between C.albicans and the host. This Candida albicans (strain SC5314 / ATCC MYA-2876) (Yeast) protein is Cell wall protein RHD3 (RHD3).